A 232-amino-acid polypeptide reads, in one-letter code: Large ribosomal subunit protein uL1 (232 aa).

Belongs to the universal ribosomal protein uL1 family. As to quaternary structure, part of the 50S ribosomal subunit.

Functionally, binds directly to 23S rRNA. The L1 stalk is quite mobile in the ribosome, and is involved in E site tRNA release. Protein L1 is also a translational repressor protein, it controls the translation of the L11 operon by binding to its mRNA. This Rhizorhabdus wittichii (strain DSM 6014 / CCUG 31198 / JCM 15750 / NBRC 105917 / EY 4224 / RW1) (Sphingomonas wittichii) protein is Large ribosomal subunit protein uL1.